A 304-amino-acid chain; its full sequence is Urease accessory protein UreD 2 (304 aa).

This sequence belongs to the UreD family. UreD, UreF and UreG form a complex that acts as a GTP-hydrolysis-dependent molecular chaperone, activating the urease apoprotein by helping to assemble the nickel containing metallocenter of UreC. The UreE protein probably delivers the nickel.

The protein localises to the cytoplasm. Its function is as follows. Required for maturation of urease via the functional incorporation of the urease nickel metallocenter. Disrupting the ure2 operon has no effect on urease activity or pathogen survival in BALB/c mice when administered orally. The polypeptide is Urease accessory protein UreD 2 (Brucella abortus (strain 2308)).